Consider the following 353-residue polypeptide: Probable protein phosphatase 2C 48 (353 aa).

One can recognise a PPM-type phosphatase domain in the interval 54–348 (FAAVCSRRGE…DDCSAICLFF (295 aa)). Residues Asp90, Gly91, Asp293, and Asp339 each contribute to the Mn(2+) site.

This sequence belongs to the PP2C family. Requires Mg(2+) as cofactor. Mn(2+) serves as cofactor.

It catalyses the reaction O-phospho-L-seryl-[protein] + H2O = L-seryl-[protein] + phosphate. It carries out the reaction O-phospho-L-threonyl-[protein] + H2O = L-threonyl-[protein] + phosphate. In Oryza sativa subsp. japonica (Rice), this protein is Probable protein phosphatase 2C 48.